We begin with the raw amino-acid sequence, 197 residues long: Potassium-transporting ATPase KdpC subunit (197 aa).

The chain crosses the membrane as a helical span at residues 9–29 (LVVTLLLAALLCGAYPVLVTG).

The protein belongs to the KdpC family. The system is composed of three essential subunits: KdpA, KdpB and KdpC.

The protein localises to the cell inner membrane. In terms of biological role, part of the high-affinity ATP-driven potassium transport (or Kdp) system, which catalyzes the hydrolysis of ATP coupled with the electrogenic transport of potassium into the cytoplasm. This subunit acts as a catalytic chaperone that increases the ATP-binding affinity of the ATP-hydrolyzing subunit KdpB by the formation of a transient KdpB/KdpC/ATP ternary complex. This Nitratidesulfovibrio vulgaris (strain DSM 19637 / Miyazaki F) (Desulfovibrio vulgaris) protein is Potassium-transporting ATPase KdpC subunit.